The following is a 121-amino-acid chain: MSQKQEEENPAEETGEEKQDTQEKEGILPEKAEEAKLKAKYPSLGQKPGGSDFLMKRLQKGQKYFDSGDYNMAKAKMKNKQLPSAGPDKNLVTGDHIPTPQDLPQRKSSLVTSKLAGGQVE.

The interval Met-1 to Phe-53 is disordered. At Ser-2 the chain carries N-acetylserine. Position 2 is a phosphoserine (Ser-2). The segment covering Glu-16 to Leu-37 has biased composition (basic and acidic residues). At Thr-21 the chain carries Phosphothreonine. The residue at position 43 (Ser-43) is a Phosphoserine. Phosphoserine; by GWL is present on Ser-67. A disordered region spans residues Asn-79–Glu-121. Position 109 is a phosphoserine; by PKA (Ser-109).

It belongs to the endosulfine family. As to quaternary structure, interacts (when phosphorylated at Ser-67) with PPP2R2D. Interacts with ABCC8. Interacts with SNCA; interaction is disrupted when phosphorylated at Ser-109. In terms of processing, phosphorylation at Ser-67 by GWL during mitosis is essential for interaction with PPP2R2D (PR55-delta) and subsequent inactivation of PP2A. Phosphorylated by PKA.

The protein localises to the cytoplasm. Its function is as follows. Protein phosphatase inhibitor that specifically inhibits protein phosphatase 2A (PP2A) during mitosis. When phosphorylated at Ser-67 during mitosis, specifically interacts with PPP2R2D (PR55-delta) and inhibits its activity, leading to inactivation of PP2A, an essential condition to keep cyclin-B1-CDK1 activity high during M phase. Also acts as a stimulator of insulin secretion by interacting with sulfonylurea receptor (ABCC8), thereby preventing sulfonylurea from binding to its receptor and reducing K(ATP) channel currents. In Bos taurus (Bovine), this protein is Alpha-endosulfine (ENSA).